The following is a 93-amino-acid chain: Conotoxin Mr105 (93 aa).

A signal peptide spans 1–22 (MQRGAVLLGVVALLVLWPQAGA). Residues 23 to 33 (ELYDVNDPDVR) constitute a propeptide that is removed on maturation.

Belongs to the F superfamily. Contains 4 disulfide bonds. As to expression, expressed by the venom duct.

The protein localises to the secreted. The sequence is that of Conotoxin Mr105 from Conus marmoreus (Marble cone).